Consider the following 394-residue polypeptide: Elongation factor Tu (394 aa).

Residues 10–204 (KPHVNIGTIG…AVDSWIPLPE (195 aa)) enclose the tr-type G domain. A G1 region spans residues 19–26 (GHVDHGKT). Residue 19–26 (GHVDHGKT) coordinates GTP. Thr-26 is a binding site for Mg(2+). The tract at residues 60–64 (GITIN) is G2. Residues 81 to 84 (DCPG) are G3. Residues 81–85 (DCPGH) and 136–139 (NKCD) each bind GTP. Residues 136–139 (NKCD) are G4. The interval 174–176 (SGL) is G5.

This sequence belongs to the TRAFAC class translation factor GTPase superfamily. Classic translation factor GTPase family. EF-Tu/EF-1A subfamily. In terms of assembly, monomer.

The protein resides in the cytoplasm. It carries out the reaction GTP + H2O = GDP + phosphate + H(+). Its function is as follows. GTP hydrolase that promotes the GTP-dependent binding of aminoacyl-tRNA to the A-site of ribosomes during protein biosynthesis. This is Elongation factor Tu from Ureaplasma urealyticum serovar 10 (strain ATCC 33699 / Western).